Consider the following 167-residue polypeptide: Biotin carboxyl carrier protein of acetyl-CoA carboxylase (167 aa).

Residues 53 to 91 (SGFSQERPIPTDPKKDTIKETTTENSETSTTTSSGDFIS) are disordered. Positions 64–74 (DPKKDTIKETT) are enriched in basic and acidic residues. The span at 75 to 86 (TENSETSTTTSS) shows a compositional bias: low complexity. In terms of domain architecture, Biotinyl-binding spans 87 to 163 (GDFISSPLVG…QFGSKLFRIA (77 aa)). Lys-129 is subject to N6-biotinyllysine.

Homodimer.

The protein operates within lipid metabolism; fatty acid biosynthesis. Its function is as follows. This protein is a component of the acetyl coenzyme A carboxylase complex; first, biotin carboxylase catalyzes the carboxylation of the carrier protein and then the transcarboxylase transfers the carboxyl group to form malonyl-CoA. This Chlamydia pneumoniae (Chlamydophila pneumoniae) protein is Biotin carboxyl carrier protein of acetyl-CoA carboxylase (accB).